The sequence spans 355 residues: Peptide chain release factor 1 (355 aa).

Residue Q229 is modified to N5-methylglutamine. Positions 280-299 (LDRERSAARKGQVGSGDRSE) are disordered.

Belongs to the prokaryotic/mitochondrial release factor family. Methylated by PrmC. Methylation increases the termination efficiency of RF1.

It localises to the cytoplasm. Its function is as follows. Peptide chain release factor 1 directs the termination of translation in response to the peptide chain termination codons UAG and UAA. The chain is Peptide chain release factor 1 from Parvibaculum lavamentivorans (strain DS-1 / DSM 13023 / NCIMB 13966).